The sequence spans 95 residues: High mobility group nucleosome-binding domain-containing protein 3 (95 aa).

Composition is skewed to basic and acidic residues over residues 1–25, 39–53, and 62–72; these read MPKRKSPENAEGKDGAKLTKQEPTR, PEPKPRKTSAKKEPG, and GKKEEKQEAGK. Positions 1–95 are disordered; it reads MPKRKSPENA…EEVLSTNASH (95 aa). Ser-6 is modified (phosphoserine). Ser-78 carries the post-translational modification Phosphoserine.

Belongs to the HMGN family. In terms of assembly, interacts with the ligand binding domain of the thyroid receptor (TR) (in vitro). Requires the presence of thyroid hormone for its interaction. Interacts with transcriptional regulator SEHBP. Interacts with nucleosomes.

It is found in the nucleus. In terms of biological role, binds to nucleosomes, regulating chromatin structure and consequently, chromatin-dependent processes such as transcription, DNA replication and DNA repair. Affects both insulin and glucagon levels and modulates the expression of pancreatic genes involved in insulin secretion. Regulates the expression of the glucose transporter SLC2A2 by binding specifically to its promoter region and recruiting PDX1 and additional transcription factors. Regulates the expression of SLC6A9, a glycine transporter which regulates the glycine concentration in synaptic junctions in the central nervous system, by binding to its transcription start site. May play a role in ocular development and astrocyte function. The sequence is that of High mobility group nucleosome-binding domain-containing protein 3 (Hmgn3) from Rattus norvegicus (Rat).